Reading from the N-terminus, the 61-residue chain is MNETTPAFDRHMLEALVCPVTQTVLEYDAEAQELVSRAANLAFPIRNGIPVMLTDEARPLE.

Belongs to the UPF0434 family.

This Ruegeria sp. (strain TM1040) (Silicibacter sp.) protein is UPF0434 protein TM1040_0056.